We begin with the raw amino-acid sequence, 341 residues long: Anthranilate phosphoribosyltransferase (341 aa).

5-phospho-alpha-D-ribose 1-diphosphate is bound by residues glycine 79, 82–83 (GD), threonine 87, 89–92 (NIST), 107–115 (KHGNRAASS), and alanine 119. Position 79 (glycine 79) interacts with anthranilate. A Mg(2+)-binding site is contributed by serine 91. An anthranilate-binding site is contributed by asparagine 110. Anthranilate is bound at residue arginine 165. Mg(2+)-binding residues include aspartate 224 and glutamate 225.

This sequence belongs to the anthranilate phosphoribosyltransferase family. In terms of assembly, homodimer. Mg(2+) serves as cofactor.

It carries out the reaction N-(5-phospho-beta-D-ribosyl)anthranilate + diphosphate = 5-phospho-alpha-D-ribose 1-diphosphate + anthranilate. The protein operates within amino-acid biosynthesis; L-tryptophan biosynthesis; L-tryptophan from chorismate: step 2/5. Its function is as follows. Catalyzes the transfer of the phosphoribosyl group of 5-phosphorylribose-1-pyrophosphate (PRPP) to anthranilate to yield N-(5'-phosphoribosyl)-anthranilate (PRA). This is Anthranilate phosphoribosyltransferase from Lacticaseibacillus casei (strain BL23) (Lactobacillus casei).